Reading from the N-terminus, the 103-residue chain is Cytochrome c55X (103 aa).

A signal peptide spans 1 to 17; that stretch reads MARLALLLVLLAGTAVA. Heme c-binding residues include Cys-36, Cys-39, and His-40.

Binds 1 heme c group covalently per subunit.

Its subcellular location is the periplasm. In terms of biological role, monoheme c-type cytochrome. This chain is Cytochrome c55X (nirC), found in Paracoccus denitrificans (strain Pd 1222).